We begin with the raw amino-acid sequence, 257 residues long: Phosphatidylglycerol--prolipoprotein diacylglyceryl transferase (257 aa).

4 consecutive transmembrane segments (helical) span residues F12–A32, F49–E69, I83–I103, and L109–I129. Position 131 (R131) interacts with a 1,2-diacyl-sn-glycero-3-phospho-(1'-sn-glycerol). Helical transmembrane passes span V167 to I187, G197 to M217, and G226 to I246.

The protein belongs to the Lgt family.

The protein localises to the cell membrane. It carries out the reaction L-cysteinyl-[prolipoprotein] + a 1,2-diacyl-sn-glycero-3-phospho-(1'-sn-glycerol) = an S-1,2-diacyl-sn-glyceryl-L-cysteinyl-[prolipoprotein] + sn-glycerol 1-phosphate + H(+). The protein operates within protein modification; lipoprotein biosynthesis (diacylglyceryl transfer). Its function is as follows. Catalyzes the transfer of the diacylglyceryl group from phosphatidylglycerol to the sulfhydryl group of the N-terminal cysteine of a prolipoprotein, the first step in the formation of mature lipoproteins. This is Phosphatidylglycerol--prolipoprotein diacylglyceryl transferase from Streptococcus agalactiae serotype Ia (strain ATCC 27591 / A909 / CDC SS700).